We begin with the raw amino-acid sequence, 412 residues long: MLIVNREEYSKSDFDLRLQAYEEMEQFQEAAGNRFALCLKDPFDIITLVFFLKEKKSSVLLIHEDTPKETAIEMAKRANCIGILYGENSDFTKLEAVNYLAEEPSLLQYSSGTTGEPKLIRRAWTEVDTEIKVYNEALNCDIDEVPIVMAPVSHSYGLICGTLSAITRGSKPIIITNKNPKFALNIVRNTEKHIVYAVPLMLHIMGSFPQGTFQFHKIMTSGAPLPEALFYKLKETTTYMMQQYGCSEAGCISICHDMKSHLDLGNPLPHASISIGSDENAPEEIIVKMNDKEIFTKDLGYKSERGLHFMGRMDDVINVSGLKVFPIEVEETMLRLEGVQEAIVYRGKHPVMGEIVKAKVISHIDPVQIREWCMQHLPSYKVPHEIESVTEIPKNKTGKVSRKLLEMGEVTT.

Belongs to the ATP-dependent AMP-binding enzyme family.

It carries out the reaction holo-[aryl-carrier protein] + 3,4-dihydroxybenzoate + ATP = 3,4-dihydroxybenzoyl-[aryl-carrier protein] + AMP + diphosphate. The enzyme catalyses 3,4-dihydroxybenzoate + ATP + H(+) = 3,4-dihydroxybenzoyl-5'-AMP + diphosphate. The catalysed reaction is 3,4-dihydroxybenzoyl-5'-AMP + holo-[aryl-carrier protein] = 3,4-dihydroxybenzoyl-[aryl-carrier protein] + AMP + H(+). It participates in siderophore biosynthesis; petrobactin biosynthesis. With respect to regulation, ATP-pyrophosphate exchange is inhibited in vitro by nonhydrolyzable acylsulfamate analogs that mimic the AsbC-bound intermediate 3,4-dihydroxybenzoyl-AMP. Involved in the biosynthesis of petrobactin, a catecholate siderophore that functions in both iron acquisition and virulence. Catalyzes the adenylation of 3,4-dihydroxybenzoate (3,4-DHBA) to the corresponding AMP ester, followed by the transfer of the activated unit to the phosphopantetheine thiol of the aryl-carrier protein AsbD. This Bacillus anthracis protein is 3,4-dihydroxybenzoate--[aryl-carrier protein] ligase.